The chain runs to 347 residues: S-adenosylmethionine:tRNA ribosyltransferase-isomerase (347 aa).

It belongs to the QueA family. As to quaternary structure, monomer.

It localises to the cytoplasm. The catalysed reaction is 7-aminomethyl-7-carbaguanosine(34) in tRNA + S-adenosyl-L-methionine = epoxyqueuosine(34) in tRNA + adenine + L-methionine + 2 H(+). It functions in the pathway tRNA modification; tRNA-queuosine biosynthesis. Transfers and isomerizes the ribose moiety from AdoMet to the 7-aminomethyl group of 7-deazaguanine (preQ1-tRNA) to give epoxyqueuosine (oQ-tRNA). This chain is S-adenosylmethionine:tRNA ribosyltransferase-isomerase, found in Streptococcus thermophilus (strain ATCC BAA-491 / LMD-9).